We begin with the raw amino-acid sequence, 426 residues long: Glutamate-1-semialdehyde 2,1-aminomutase (426 aa).

Residue Lys-265 is modified to N6-(pyridoxal phosphate)lysine.

Belongs to the class-III pyridoxal-phosphate-dependent aminotransferase family. HemL subfamily. In terms of assembly, homodimer. Pyridoxal 5'-phosphate serves as cofactor.

Its subcellular location is the cytoplasm. The enzyme catalyses (S)-4-amino-5-oxopentanoate = 5-aminolevulinate. It participates in porphyrin-containing compound metabolism; protoporphyrin-IX biosynthesis; 5-aminolevulinate from L-glutamyl-tRNA(Glu): step 2/2. This chain is Glutamate-1-semialdehyde 2,1-aminomutase, found in Yersinia pestis bv. Antiqua (strain Antiqua).